The following is a 473-amino-acid chain: Ribulose bisphosphate carboxylase large chain (473 aa).

Substrate-binding residues include N116 and T166. K168 (proton acceptor) is an active-site residue. Position 170 (K170) interacts with substrate. Mg(2+) is bound by residues K194, D196, and E197. The residue at position 194 (K194) is an N6-carboxylysine. H287 serves as the catalytic Proton acceptor. Positions 288, 320, and 372 each coordinate substrate.

It belongs to the RuBisCO large chain family. Type I subfamily. In terms of assembly, heterohexadecamer of 8 large chains and 8 small chains. Requires Mg(2+) as cofactor.

It catalyses the reaction 2 (2R)-3-phosphoglycerate + 2 H(+) = D-ribulose 1,5-bisphosphate + CO2 + H2O. It carries out the reaction D-ribulose 1,5-bisphosphate + O2 = 2-phosphoglycolate + (2R)-3-phosphoglycerate + 2 H(+). Functionally, ruBisCO catalyzes two reactions: the carboxylation of D-ribulose 1,5-bisphosphate, the primary event in carbon dioxide fixation, as well as the oxidative fragmentation of the pentose substrate. Both reactions occur simultaneously and in competition at the same active site. The chain is Ribulose bisphosphate carboxylase large chain from Cupriavidus metallidurans (strain ATCC 43123 / DSM 2839 / NBRC 102507 / CH34) (Ralstonia metallidurans).